Consider the following 558-residue polypeptide: MLTQPSIKYRPAQIIDFPARTWPSKQLKTPPRWCSTDLRDGNQALANPMDHVKKMAFFKHLIECGFKEIEVAFPAASQTDFDFVRLLIEGKHIPDDVTIQVMTQSRVDLIERTIQSLVGAKKAIVHIYNATAPVFREIVFCQDKPATLELAVQGVKHIRQLCEQYPDTQWTLQYSPETFCFTEPDFALEVCEAAAKTWQPSLERPMILNLPTTVEVNTPNVFADQIEHFITSFSSLENITISVHPHNDRGTGVATAEMAILAGAQRVEGCLFGNGERTGNVDLVTLAMNLYSQGVYPNLDFSDMRRTVELVEECNELPVHPRHPYAGALAFTAFSGSHQDAIKKGFASQKSTSSMIWQIPYLPLDPKDIGCTYEEVIRVNSQSGKSGAAWLLQENHGLFLPRKLQIDFSKKVKNHTDQTGHEMPLADVWRLFRESYRLNPDDKGQMKLMDYRSHSSNGLQEIRATLRYQEKTWQLVGEGKGLLSAMLDALRKRFNWQINISDFHEHTLGQQTKSKAVSYVQIESDQATPSFGVAIDEDSTKASLQALINACHPLYKEA.

The region spanning 31–305 (PRWCSTDLRD…YPNLDFSDMR (275 aa)) is the Pyruvate carboxyltransferase domain. Residues aspartate 40, histidine 244, histidine 246, and asparagine 280 each coordinate Mg(2+). A regulatory domain region spans residues 439-558 (NPDDKGQMKL…NACHPLYKEA (120 aa)).

The protein belongs to the alpha-IPM synthase/homocitrate synthase family. LeuA type 2 subfamily. In terms of assembly, homodimer. The cofactor is Mg(2+).

The protein resides in the cytoplasm. The enzyme catalyses 3-methyl-2-oxobutanoate + acetyl-CoA + H2O = (2S)-2-isopropylmalate + CoA + H(+). The protein operates within amino-acid biosynthesis; L-leucine biosynthesis; L-leucine from 3-methyl-2-oxobutanoate: step 1/4. Its function is as follows. Catalyzes the condensation of the acetyl group of acetyl-CoA with 3-methyl-2-oxobutanoate (2-ketoisovalerate) to form 3-carboxy-3-hydroxy-4-methylpentanoate (2-isopropylmalate). The protein is 2-isopropylmalate synthase of Marinomonas sp. (strain MWYL1).